We begin with the raw amino-acid sequence, 475 residues long: MEKPEFKVIIVGGSIAGLTLAHCLAQANIDHVVLEKRSAIAPQEGAFIGIWPNGARVFEQLGIFGDMEKQTVPFHRMHLRYPDGFSFSSSLPELVSERFGYPIITLDRQRVLEVLHERYPFKSNIIVNKKVVEIQTLDHGARVVTEDGAVYTGDLIVGADGVHSSIRSEMWRLADAISPGLITEHERKSLTVEYACVFGISSPIPGLESGELINSYSDGSCVITFHGEDGRVFWFMIEKLQRKYVYPDNPRFSVDDAAGFCARLSSVPIWRDICVAHLWRNRISVSMTALEEGLFQTWHFGRVVLLGDSVHKMTPNIGQGANTAVEDAATLASLINGLLKSGSASHTSDSDINNLLRVFQSLRYDRVKRTYQQSCSGARLQTRDDFLKILVGRYVFPYVGDYISHSMCKDISGGHVIDFLPLPKRSKAGWAKYSRSNRSRATQLQWGSIWLSPVILCLFCMLFLWPWSSSLPISS.

The FAD site is built by Glu35, Gly49, and Arg108. Tyr216 is a catalytic residue. Residues Asp308 and Ala321 each contribute to the FAD site. A glycan (N-linked (GlcNAc...) asparagine) is linked at Asn437. Residues 446–466 (WGSIWLSPVILCLFCMLFLWP) form a helical membrane-spanning segment.

Belongs to the paxM FAD-dependent monooxygenase family. It depends on FAD as a cofactor.

The protein localises to the membrane. It carries out the reaction [(1'E)-3'-hydroxy-3',7'-dimethylocta-1',6'-dien-1'-yl]-quinolinone B + NADPH + O2 + H(+) = [(1'E)-5'-(3',3'-dimethyloxiran-2'-yl)-3'-hydroxy-3'-methylpent-1'-en-1'-yl]-quinolinone B + NADP(+) + H2O. The protein operates within secondary metabolite biosynthesis. It functions in the pathway alkaloid biosynthesis. It participates in mycotoxin biosynthesis. FAD-dependent monooxygenase; part of the gene cluster that mediates the biosynthesis of penigequinolones, potent insecticidal alkaloids that contain a highly modified 10-carbon prenyl group. The first stage is catalyzed by the nonribosomal peptide synthetase penN that condenses anthranilic acid and O-methyl-L-tyrosine to produce 4'-methoxycyclopeptin. 4'-methoxycyclopeptin is then converted to 4'-methoxydehydrocyclopeptin by the ketoglutarate-dependent dioxygenase penM through dehydrogenation to form a double bond between C-alpha and C-beta of the O-methyltyrosine side chain. PenM also converts its first product methoxydehydrocyclopeptin to 4'-methoxycyclopenin. The following conversion of 4'methoxycyclopenin into 4'-methoxyviridicatin is catalyzed by the cyclopenase penL. 4'-methoxyviridicatin is the precursor of quinolone natural products, and is further converted to quinolinone B. The prenyltransferase penI then catalyzes the canonical Friedel-Crafts alkylation of quinolinone B with dimethylallyl cation to yield dimethylallyl quinolone, which is subjected to FAD-dependent dehydrogenation by the FAD-linked oxidoreductase penH to yield conjugated aryl diene. The delta(3') double bond then serves as the site of the second alkylation with DMAPP catalyzed by the prenyltransferase penG to yield a carbenium ion intermediate, which can be attacked by H(2)O to yield a styrenyl quinolone containing a C3'-hydroxyprenyl chain, or undergo cyclization to yield yaequinolones J1 and J2. The conversion of the styrenyl quinolone into the tetrahydrofuran-containing yaequinolone C is performed by the FAD-dependent monooxygenase penE and involves epoxidation of the terminal C7'-C8' olefin, followed by epoxide ring opening initiated by the C3' hydroxyl group. The predicted cysteine hydrolase penJ acts as an epoxide hydrolase that enhances the rate of the 5-exo-tet cyclization step, increasing the yield of yaequinolone C. PenF catalyzes the cationic rearrangement of the epoxide formed by penE (before ring opening to produce yaequinolone C) into yaequinolone D. Finally, the short-chain dehydrogenase/reductase (SDR)-like reductase penD, catalyzes both the dehydration of yaequinolone D and the reduction of the resulting oxonium to yield penigequinolone. The chain is FAD-dependent monooxygenase penE from Penicillium thymicola.